A 178-amino-acid chain; its full sequence is Sec-independent protein translocase protein TatB (178 aa).

A helical membrane pass occupies residues 1 to 21 (MFDIGWSELLVIGVVALIAIG). Residues 146 to 178 (LAIVREIKPEPQPQPADGAAPAEPERLKDAKAS) are disordered. A compositionally biased stretch (basic and acidic residues) spans 168 to 178 (EPERLKDAKAS).

The protein belongs to the TatB family. As to quaternary structure, the Tat system comprises two distinct complexes: a TatABC complex, containing multiple copies of TatA, TatB and TatC subunits, and a separate TatA complex, containing only TatA subunits. Substrates initially bind to the TatABC complex, which probably triggers association of the separate TatA complex to form the active translocon.

The protein localises to the cell inner membrane. Functionally, part of the twin-arginine translocation (Tat) system that transports large folded proteins containing a characteristic twin-arginine motif in their signal peptide across membranes. Together with TatC, TatB is part of a receptor directly interacting with Tat signal peptides. TatB may form an oligomeric binding site that transiently accommodates folded Tat precursor proteins before their translocation. This Bradyrhizobium sp. (strain ORS 278) protein is Sec-independent protein translocase protein TatB.